The sequence spans 460 residues: NADH-ubiquinone oxidoreductase chain 4 (460 aa).

A run of 12 helical transmembrane segments spans residues 20-42, 61-81, 93-113, 114-134, 148-168, 195-215, 225-245, 258-278, 285-304, 309-331, 351-371, and 394-414; these read PKWLWSTTTAHGLLIALISLTWL, PLSTPLLGLTCWLLPLMVLAS, QRLYITLLASLQTFLIMAFGA, TEIIMFYIMFEATLIPTLIII, TYFLFYTLAGSLPLLVALLLL, IWWAGCLIAFLVKMPLYGVHL, PVAGSMVLAAVLLKLGGYGMM, LAYPFIILALWGIIMTGSICL, SLIAYSSVSHMGLVAGGILI, GFTGAIILMIAHGLVSSALFCLA, MIFPLTAVWWFIANLANLALP, and IILTGTGTLITAGYSLYLFLM.

It belongs to the complex I subunit 4 family.

The protein localises to the mitochondrion membrane. The enzyme catalyses a ubiquinone + NADH + 5 H(+)(in) = a ubiquinol + NAD(+) + 4 H(+)(out). Its function is as follows. Core subunit of the mitochondrial membrane respiratory chain NADH dehydrogenase (Complex I) that is believed to belong to the minimal assembly required for catalysis. Complex I functions in the transfer of electrons from NADH to the respiratory chain. The immediate electron acceptor for the enzyme is believed to be ubiquinone. The polypeptide is NADH-ubiquinone oxidoreductase chain 4 (MT-ND4) (Formosania lacustris (Oriental stream loach)).